Reading from the N-terminus, the 1180-residue chain is Integrin alpha-1 (1180 aa).

The N-terminal stretch at 1–28 is a signal peptide; sequence MVPRRPASLEVTVACIWLLTVILGFCVS. Residues 29-1142 are Extracellular-facing; it reads FNVDVKNSMS…SKDGLPGRVP (1114 aa). One copy of the FG-GAP 1 repeat lies at 30 to 91; it reads NVDVKNSMSF…CPVGRERAMP (62 aa). Cys-82 and Cys-92 are oxidised to a cystine. 9 N-linked (GlcNAc...) asparagine glycosylation sites follow: Asn-100, Asn-105, Asn-112, Asn-217, Asn-317, Asn-341, Asn-402, Asn-418, and Asn-459. The FG-GAP 2 repeat unit spans residues 101–160; the sequence is TSIPNVTEIKENMTFGSTLVTNPNGGFLACGPLYAYRCGHLHYTTGICSDVSPTFQVVNS. A VWFA domain is found at 175-364; that stretch reads IVLDGSNSIY…LGERIFALEA (190 aa). The stretch at 365–417 is one FG-GAP 3 repeat; it reads TADQSAASFEMEMSQTGFSAHYSQDWVMLGAVGAYDWNGTVVMQKANQMVIPH. 4 FG-GAP repeats span residues 422–474, 475–537, 556–614, and 618–678; these read QTEP…DGNI, NILQ…RFEY, SCTK…TIRE, and QRIP…FEPN. Residues Asp-497, Asp-499, Asp-501, and Asp-505 each contribute to the Ca(2+) site. Asn-531 carries an N-linked (GlcNAc...) asparagine glycan. Asp-579, Asn-581, Asp-583, Asp-587, Asp-641, Asn-643, Asp-645, and Asp-649 together coordinate Ca(2+). A disulfide bridge connects residues Cys-687 and Cys-696. Asn-698, Asn-747, and Asn-779 each carry an N-linked (GlcNAc...) asparagine glycan. Cys-702 and Cys-755 are oxidised to a cystine. The cysteines at positions 807 and 813 are disulfide-linked. Asn-820, Asn-839, Asn-882, Asn-907, Asn-938, Asn-965, Asn-973, and Asn-1007 each carry an N-linked (GlcNAc...) asparagine glycan. A disulfide bond links Cys-877 and Cys-885. Intrachain disulfides connect Cys-1029–Cys-1062 and Cys-1066–Cys-1073. 3 N-linked (GlcNAc...) asparagine glycosylation sites follow: Asn-1084, Asn-1103, and Asn-1114. The chain crosses the membrane as a helical span at residues 1143–1165; sequence LWVILLSAFAGLLLLMLLILALW. Over 1166-1180 the chain is Cytoplasmic; sequence KIGFFKRPLKKKMEK. The short motif at 1168 to 1172 is the GFFKR motif element; sequence GFFKR.

This sequence belongs to the integrin alpha chain family. Heterodimer of an alpha and a beta subunit. Alpha-1 associates with beta-1. Interacts with RAB21. Interacts (via cytoplasmic domain) with PTPN2; activates PTPN2 phosphatase activity towards EGFR and negatively regulates EGF signaling.

The protein resides in the membrane. Integrin alpha-1/beta-1 is a receptor for laminin and collagen. It recognizes the proline-hydroxylated sequence G-F-P-G-E-R in collagen. Involved in anchorage-dependent, negative regulation of EGF-stimulated cell growth. This chain is Integrin alpha-1 (Itga1), found in Rattus norvegicus (Rat).